The primary structure comprises 113 residues: Mediator of RNA polymerase II transcription subunit 11 (113 aa).

Belongs to the Mediator complex subunit 11 family. In terms of assembly, component of the Mediator complex.

Its subcellular location is the nucleus. Its function is as follows. Component of the Mediator complex, a coactivator involved in the regulated transcription of nearly all RNA polymerase II-dependent genes. Mediator functions as a bridge to convey information from gene-specific regulatory proteins to the basal RNA polymerase II transcription machinery. Mediator is recruited to promoters by direct interactions with regulatory proteins and serves as a scaffold for the assembly of a functional pre-initiation complex with RNA polymerase II and the general transcription factors. This is Mediator of RNA polymerase II transcription subunit 11 (MED11) from Eremothecium gossypii (strain ATCC 10895 / CBS 109.51 / FGSC 9923 / NRRL Y-1056) (Yeast).